A 1273-amino-acid chain; its full sequence is Chitin synthase 7 (1273 aa).

Residues 1–69 (MPAVERNAPF…LINPSSGGPG (69 aa)) form a disordered region. Over 1–79 (MPAVERNAPF…FSAASRSKHR (79 aa)) the chain is Cytoplasmic. A helical membrane pass occupies residues 80–100 (FSWWTAFSLFVTFWAPSPLLS). At 101–117 (SCCGLKDKQSRQAWREK) the chain is on the extracellular side. Residues 118–138 (VSLVFIAILLGGFIGFITMGL) form a helical membrane-spanning segment. Residues 139 to 360 (NAALCPSASS…FISNLVLYCS (222 aa)) lie on the Cytoplasmic side of the membrane. The chain crosses the membrane as a helical span at residues 361-381 (LVVILAIVLIRFFMAVWFAWF). At 382 to 820 (MAGRMSSPPR…LCGTFCFSMQ (439 aa)) the chain is on the extracellular side. Asn412 is a glycosylation site (N-linked (GlcNAc...) asparagine). A disordered region spans residues 416-451 (AAPWANKQRPPPSQPARRRRDSAQSATPSVPDSLSV). N-linked (GlcNAc...) asparagine glycosylation is found at Asn667 and Asn796. A helical membrane pass occupies residues 821–841 (FVVFMDLLGTAVLPISIALTY). Residues 842-857 (TLVVTYCLNPPHSFTE) lie on the Cytoplasmic side of the membrane. A helical transmembrane segment spans residues 858–878 (AIPLMLLVAVIGMPALLILLA). Topologically, residues 879–881 (TRK) are extracellular. A helical transmembrane segment spans residues 882 to 902 (VVYVLWMLIYLLALPVWNFVL). The Cytoplasmic segment spans residues 903–1273 (PVYSFWHFDD…RGRSYHDRFS (371 aa)). 2 disordered regions span residues 966 to 1009 (RELE…SVTV) and 1126 to 1273 (NGGG…DRFS). A compositionally biased stretch (low complexity) spans 1000–1009 (SDSFSDSVTV). A compositionally biased stretch (pro residues) spans 1215–1232 (QHPPQPSQPPQPPQPAQP). The span at 1233–1246 (TRPGGAPAAPPRGA) shows a compositional bias: low complexity.

It belongs to the chitin synthase family. Class IV subfamily.

The protein localises to the cell membrane. The protein resides in the cytoplasmic vesicle membrane. The catalysed reaction is [(1-&gt;4)-N-acetyl-beta-D-glucosaminyl](n) + UDP-N-acetyl-alpha-D-glucosamine = [(1-&gt;4)-N-acetyl-beta-D-glucosaminyl](n+1) + UDP + H(+). Functionally, polymerizes chitin, a structural polymer of the cell wall and septum, by transferring the sugar moiety of UDP-GlcNAc to the non-reducing end of the growing chitin polymer. The polypeptide is Chitin synthase 7 (Mycosarcoma maydis (Corn smut fungus)).